The sequence spans 362 residues: MALSTSAIGFEGYEKRLEISFFEAGIFSDPEGRGLRALSKEQLDKVLKPAECTIVSSLSNNEVDSYVLSESSLFVYPYKIIIKTCGTTKLLLSIPPILELADGLSLKVKSVKYTRGSFNFPEVQPYPHRNFSEEVAILDGYFGKLGTGSKAYVMGGAGKQQQWHVYSASAESAENTFPIYTLEMCMTGLDKKSASVFFKTQSSSAAVMTDASGIRKILPGSDICDFDFEPCGYSMNAVEGGTISTIHVTPEDGFSYASFEAMGYDFKDVNLDALIQRVLSCFQPAEFSVALHCDSIGEKLDSVFELDVKGYACGERSYEALGKGGSIMYCGFTSTGSCGSPRSTLLCCWSENEDQEGEKKHF.

Active-site residues include glutamate 11 and glutamate 14. Serine 71 (schiff-base intermediate with substrate; via pyruvic acid) is an active-site residue. Serine 71 bears the Pyruvic acid (Ser); by autocatalysis mark. The Proton donor; for catalytic activity role is filled by cysteine 85. Catalysis depends on proton acceptor; for processing activity residues serine 234 and histidine 247.

Belongs to the eukaryotic AdoMetDC family. Pyruvate is required as a cofactor. Post-translationally, is synthesized initially as an inactive proenzyme. Formation of the active enzyme involves a self-maturation process in which the active site pyruvoyl group is generated from an internal serine residue via an autocatalytic post-translational modification. Two non-identical subunits are generated from the proenzyme in this reaction, and the pyruvate is formed at the N-terminus of the alpha chain, which is derived from the carboxyl end of the proenzyme. The post-translation cleavage follows an unusual pathway, termed non-hydrolytic serinolysis, in which the side chain hydroxyl group of the serine supplies its oxygen atom to form the C-terminus of the beta chain, while the remainder of the serine residue undergoes an oxidative deamination to produce ammonia and the pyruvoyl group blocking the N-terminus of the alpha chain.

It catalyses the reaction S-adenosyl-L-methionine + H(+) = S-adenosyl 3-(methylsulfanyl)propylamine + CO2. It participates in amine and polyamine biosynthesis; S-adenosylmethioninamine biosynthesis; S-adenosylmethioninamine from S-adenosyl-L-methionine: step 1/1. The sequence is that of S-adenosylmethionine decarboxylase proenzyme (SAMDC) from Ipomoea nil (Japanese morning glory).